The chain runs to 121 residues: Small ribosomal subunit protein uS11 (121 aa).

It belongs to the universal ribosomal protein uS11 family. Part of the 30S ribosomal subunit. Interacts with proteins S7 and S18. Binds to IF-3.

Its function is as follows. Located on the platform of the 30S subunit, it bridges several disparate RNA helices of the 16S rRNA. Forms part of the Shine-Dalgarno cleft in the 70S ribosome. This is Small ribosomal subunit protein uS11 from Ureaplasma parvum serovar 3 (strain ATCC 27815 / 27 / NCTC 11736).